We begin with the raw amino-acid sequence, 228 residues long: Urease accessory protein UreF (228 aa).

It belongs to the UreF family. In terms of assembly, ureD, UreF and UreG form a complex that acts as a GTP-hydrolysis-dependent molecular chaperone, activating the urease apoprotein by helping to assemble the nickel containing metallocenter of UreC. The UreE protein probably delivers the nickel.

Its subcellular location is the cytoplasm. In terms of biological role, required for maturation of urease via the functional incorporation of the urease nickel metallocenter. The protein is Urease accessory protein UreF of Prochlorococcus marinus subsp. pastoris (strain CCMP1986 / NIES-2087 / MED4).